Reading from the N-terminus, the 329-residue chain is Cytosolic arginine sensor for mTORC1 subunit 1 (329 aa).

Phosphoserine; by PKB/AKT1 is present on Ser-14. ACT domains are found at residues 72–138 (AEAT…HTLA) and 260–321 (GELW…EVLQ). L-arginine contacts are provided by residues 111–112 (SV), Gly-274, 280–281 (IV), and 300–304 (TFNFD).

Belongs to the GATS family. As to quaternary structure, forms homodimers and heterodimers with CASTOR2. Interacts with the GATOR2 complex which is composed of MIOS, SEC13, SEH1L, WDR24 and WDR59; the interaction is negatively regulated by arginine. Interacts with TM4SF5; the interaction is positively regulated by leucine and is negatively regulated by arginine. Phosphorylation at Ser-14 by AKT1, promoting the interaction between CASTOR1 and RNF167. In terms of processing, ubiquitinated by RNF167 via 'Lys-29'-polyubiquitination, leading to its degradation, releasing the GATOR2 complex. Ubiquitination by RNF167 is promoted by phosphorylation at Ser-14 by AKT1. In terms of tissue distribution, widely expressed.

It localises to the cytoplasm. It is found in the cytosol. In terms of biological role, functions as an intracellular arginine sensor within the amino acid-sensing branch of the TORC1 signaling pathway. As a homodimer or a heterodimer with CASTOR2, binds and inhibits the GATOR subcomplex GATOR2 and thereby mTORC1. Binding of arginine to CASTOR1 allosterically disrupts the interaction of CASTOR1-containing dimers with GATOR2 which can in turn activate mTORC1 and the TORC1 signaling pathway. The polypeptide is Cytosolic arginine sensor for mTORC1 subunit 1 (Homo sapiens (Human)).